The primary structure comprises 176 residues: NAD(P)H-quinone oxidoreductase subunit J (176 aa).

This sequence belongs to the complex I 30 kDa subunit family. NDH-1 can be composed of about 15 different subunits; different subcomplexes with different compositions have been identified which probably have different functions.

It is found in the cellular thylakoid membrane. The catalysed reaction is a plastoquinone + NADH + (n+1) H(+)(in) = a plastoquinol + NAD(+) + n H(+)(out). The enzyme catalyses a plastoquinone + NADPH + (n+1) H(+)(in) = a plastoquinol + NADP(+) + n H(+)(out). Its function is as follows. NDH-1 shuttles electrons from an unknown electron donor, via FMN and iron-sulfur (Fe-S) centers, to quinones in the respiratory and/or the photosynthetic chain. The immediate electron acceptor for the enzyme in this species is believed to be plastoquinone. Couples the redox reaction to proton translocation, and thus conserves the redox energy in a proton gradient. Cyanobacterial NDH-1 also plays a role in inorganic carbon-concentration. This is NAD(P)H-quinone oxidoreductase subunit J from Nostoc punctiforme (strain ATCC 29133 / PCC 73102).